A 258-amino-acid chain; its full sequence is MKEVDNLDSIKEEWACETGPPDSQPLNDNQQKDCEYFVDSLFEEAGKAGAKCLSPTEQKKQVDVNIKLWKNGFTVNDDFRSYSDGASQQFLNSIKKGELPSELWGIFDKEEVDVKVEDKKNEVCMSTKPVFQPFSGQGHRLGSATPRIVSKAKSVEVDNKSTLSAVSLNNLEPITRIQIWLANGERTVQRFNVSHRVSHIKDFIEKYQGSQRSPPFALATALPFLRFLDETLTLEEADLKNAVIIQRLQKTAEPFRKL.

Residues 1–14 are compositionally biased toward basic and acidic residues; sequence MKEVDNLDSIKEEW. Residues 1 to 30 form a disordered region; it reads MKEVDNLDSIKEEWACETGPPDSQPLNDNQ. A required for interaction with CHRNA3 region spans residues 1–152; sequence MKEVDNLDSI…SATPRIVSKA (152 aa). The segment at 1–165 is required for inhibition of CHRNA3 ubiquitination and translocation of CHRNA3 to the plasma membrane resulting in an increase in acetylcholine-gated nicotinic acetylcholine receptor currents; it reads MKEVDNLDSI…EVDNKSTLSA (165 aa). The 65-residue stretch at 61-125 folds into the SEP domain; it reads QVDVNIKLWK…VEDKKNEVCM (65 aa). The required for interaction with VCP stretch occupies residues 168–258; that stretch reads LNNLEPITRI…QKTAEPFRKL (91 aa). Residues 170–247 enclose the UBX domain; sequence NLEPITRIQI…DLKNAVIIQR (78 aa).

Part of a complex composed of STUB1/CHIP, VCP/p97, CHRNA3, and UBXN2A that modulates the ubiquitination and endoplasmic reticulum-associated degradation (ERAD) of CHRNA3. Within the complex UBXN2A acts as a scaffold protein required for the interaction of CHRNA3 with VCP/p97, this interaction also inhibits CHRNA3 ubiquitination by STUB1/CHIP and subsequently ERAD. Interacts (via SEP domain) with CHRNA3 and interacts (via UBX domain) with VCP/P97; these interactions are required for the interaction of CHRNA3 with the STUB1-VCP-UBXN2A complex. Interacts with HSPA9/MOT-2 (via SBD domain); the interaction inhibits HSPA9/MOT-2 interaction with and degradation of p53, thereby promotes p53 translocation to the nucleus. Interacts with RICTOR. In terms of processing, ubiquitinated. Expressed in the prefrontal cortex (at protein level). Expressed in the habenula and hippocampus (at protein level). Expressed in peripheral ganglia.

The protein localises to the golgi apparatus. It is found in the endoplasmic reticulum. Its subcellular location is the perikaryon. The protein resides in the cell projection. It localises to the dendrite. The protein localises to the nucleus. It is found in the cytoplasm. Acts to repress the ubiquitination and subsequent endoplasmic reticulum-associated degradation of CHRNA3 by the STUB1-VCP-UBXN2A complex in cortical neurons. Also acts to promote the translocation of CHRNA3 to the plasma membrane and subsequently increases plasma membrane acetylcholine-gated ion-channel activation. Plays a role in the inhibition of STUB1-mediated TP53 degradation, via its interaction with HSPA9 which acts to inhibit TP53 binding to HSPA9. Positively mediates the ubiquitination and proteosomal degradation of RICTOR, may thereby act as a negative regulator of the mTORC2 pathway. The chain is UBX domain-containing protein 2A from Mus musculus (Mouse).